A 128-amino-acid polypeptide reads, in one-letter code: Cytochrome c-type biogenesis protein CcmE (128 aa).

At 1–8 (MQKIVRNR) the chain is on the cytoplasmic side. Residues 9-29 (LIKIILCFCSTCLGISIILYN) traverse the membrane as a helical; Signal-anchor for type II membrane protein segment. Residues 30–128 (LEKNIIFFFP…KHDENYRPPS (99 aa)) lie on the Periplasmic side of the membrane. Heme-binding residues include His-120 and Tyr-124.

The protein belongs to the CcmE/CycJ family.

It is found in the cell inner membrane. Its function is as follows. Heme chaperone required for the biogenesis of c-type cytochromes. Transiently binds heme delivered by CcmC and transfers the heme to apo-cytochromes in a process facilitated by CcmF and CcmH. This Rickettsia typhi (strain ATCC VR-144 / Wilmington) protein is Cytochrome c-type biogenesis protein CcmE.